A 201-amino-acid chain; its full sequence is Holliday junction resolvase RecU (201 aa).

Mg(2+) is bound by residues Thr-85, Asp-87, Glu-100, and Gln-119.

This sequence belongs to the RecU family. The cofactor is Mg(2+).

Its subcellular location is the cytoplasm. The catalysed reaction is Endonucleolytic cleavage at a junction such as a reciprocal single-stranded crossover between two homologous DNA duplexes (Holliday junction).. Endonuclease that resolves Holliday junction intermediates in genetic recombination. Cleaves mobile four-strand junctions by introducing symmetrical nicks in paired strands. Promotes annealing of linear ssDNA with homologous dsDNA. Required for DNA repair, homologous recombination and chromosome segregation. In Geobacillus sp. (strain WCH70), this protein is Holliday junction resolvase RecU.